A 96-amino-acid polypeptide reads, in one-letter code: Small ribosomal subunit protein bS6 (96 aa).

Belongs to the bacterial ribosomal protein bS6 family.

Its function is as follows. Binds together with bS18 to 16S ribosomal RNA. This chain is Small ribosomal subunit protein bS6, found in Streptococcus thermophilus (strain ATCC BAA-250 / LMG 18311).